The chain runs to 229 residues: ATP synthase subunit a (229 aa).

The next 7 membrane-spanning stretches (helical) occupy residues 24–44 (RLCF…LLFC), 45–65 (LFDL…FMLF), 83–103 (LLFC…CFLC), 117–137 (FMDV…SLLC), 143–163 (FLRL…FFDF), 177–199 (CYFI…LYLL), and 206–228 (LQLF…FLLF).

It belongs to the ATPase A chain family. As to quaternary structure, F-type ATPases have 2 components, CF(1) - the catalytic core - and CF(0) - the membrane proton channel. CF(1) has five subunits: alpha(3), beta(3), gamma(1), delta(1), epsilon(1). CF(0) has three main subunits: a, b and c.

It is found in the mitochondrion inner membrane. In terms of biological role, mitochondrial membrane ATP synthase (F(1)F(0) ATP synthase or Complex V) produces ATP from ADP in the presence of a proton gradient across the membrane which is generated by electron transport complexes of the respiratory chain. F-type ATPases consist of two structural domains, F(1) - containing the extramembraneous catalytic core and F(0) - containing the membrane proton channel, linked together by a central stalk and a peripheral stalk. During catalysis, ATP synthesis in the catalytic domain of F(1) is coupled via a rotary mechanism of the central stalk subunits to proton translocation. Key component of the proton channel; it may play a direct role in the translocation of protons across the membrane. This chain is ATP synthase subunit a (ATP6), found in Trypanosoma brucei brucei.